Here is a 228-residue protein sequence, read N- to C-terminus: Hematopoietically-expressed homeobox protein hhex (228 aa).

A DNA-binding region (homeobox) is located at residues Arg-117 to Lys-176. The segment at Leu-175–Leu-228 is disordered. A compositionally biased stretch (basic and acidic residues) spans Gly-184–Glu-207. Acidic residues predominate over residues Asp-213–Asp-222.

In terms of tissue distribution, expressed in embryonic endothelial and blood lineages. From late-blastula stage, expression is restricted to the dorsal marginal region of the extraembryonic yolk syncytial layer (YSL). By the onset of gastrulation, expressed in the entire dorsal half of the YSL. Post-gastrulation, expression appears in both anterior and posterior lateral plate mesoderm by the 3-somite stage. Posteriorly, expression is in the intermediate cell mass (ICM), which contains both endothelial and blood precursors. Subsequently expressed in the developing endothelial cells including the endocardium until the onset of circulation (24 hpf) and disappears completely by 30 hpf, at which point expression is seen in the thyroid and liver primordia. Also expressed in the developing biliary tree and pancreas.

The protein localises to the nucleus. Its function is as follows. Recognizes the DNA sequence 5'-ATTAA-3'. Transcriptional repressor. Regulates the differentiation of both endothelial and blood cells. Plays a role in embryonic dorsoventral patterning by regulating bmp expression. May establish anterior identity. Functions in the embryo to regulate liver development. Functions extraembryonically to generate organ chirality. This Danio rerio (Zebrafish) protein is Hematopoietically-expressed homeobox protein hhex.